Here is a 236-residue protein sequence, read N- to C-terminus: Small ribosomal subunit protein uS2c (236 aa).

Belongs to the universal ribosomal protein uS2 family.

Its subcellular location is the plastid. The chain is Small ribosomal subunit protein uS2c (rps2) from Cuscuta gronovii (Common dodder).